The following is a 301-amino-acid chain: GTP cyclohydrolase FolE2 (301 aa).

The protein belongs to the GTP cyclohydrolase IV family.

It carries out the reaction GTP + H2O = 7,8-dihydroneopterin 3'-triphosphate + formate + H(+). Its pathway is cofactor biosynthesis; 7,8-dihydroneopterin triphosphate biosynthesis; 7,8-dihydroneopterin triphosphate from GTP: step 1/1. Its function is as follows. Converts GTP to 7,8-dihydroneopterin triphosphate. In Pseudomonas syringae pv. syringae (strain B728a), this protein is GTP cyclohydrolase FolE2.